Reading from the N-terminus, the 643-residue chain is MADNTGTEGTGCSGWFLVEAIVENTTGQQISEDEDEAVEDSGLDMVDFIDDRPITHNSMEAQALLNEQEADAHYAAVQDLKRKYLGSPYVSPLSNIEQAVECDISPRLDAITLSRQPKKVKRRLFDRPELTDSGYGNTEVEAETQVERNGEPEDCGGGGQGRDTEGVEQVETEVQTHSNTQQHTGTTRVLELLKCKNIRATLLGKFKDCYGLSYTDLIRQFKSDKTTCGDWVIAAFGVHHSVSEAFQNLIQPVTTYSHIQWLTNAWGMVLLALVRFKVNKNRCTVARMMATRLNIPEDHMLIEPPKIQSGVAALYWFRSGISNASIVTGETPEWITRQTIVEHGLADNQFKLADMVQWAYDNDFCEESEIAFEYAQRADIDANARAFLNSNCQAKYVKDCATMCKHYKTAEMKKMNMKQWIKFRSSKFEDTGNWKPIVQFLRHQNIEFIPFLTKLKMWLHGTPKKNCIAIVGPPDTGKSCFCMSLIKFLGGTVISYVNSSSHFWLQPLCNAKVALLDDVTQSCWVYMDTYMRNLLDGNPMTIDRKHKSLALIKCPPLIVTSNIDITKEEKYKYLCSRVTLFTFPNPFPFDRNGNALYDLCETNWKCFFARLSSSLDIQTSEDEDDGDNSQAFRCVPGTVVRTV.

The Nuclear localization signal signature appears at 81 to 83 (KRK). Serine 87, serine 91, and serine 105 each carry phosphoserine; by host. The short motif at 104-113 (ISPRLDAITL) is the Nuclear export signal element. The disordered stretch occupies residues 130-166 (LTDSGYGNTEVEAETQVERNGEPEDCGGGGQGRDTEG). Residues 181–347 (QQHTGTTRVL…QTIVEHGLAD (167 aa)) form a DNA-binding region region. The 151-residue stretch at 446–596 (IEFIPFLTKL…FPFDRNGNAL (151 aa)) folds into the SF3 helicase domain. Position 472–479 (472–479 (GPPDTGKS)) interacts with ATP. Lysine 553 participates in a covalent cross-link: Glycyl lysine isopeptide (Lys-Gly) (interchain with G-Cter in SUMO).

The protein belongs to the papillomaviridae E1 protein family. In terms of assembly, can form hexamers. Interacts with E2 protein; this interaction increases E1 DNA binding specificity. Interacts with host DNA polymerase subunit POLA2. Interacts with host single stranded DNA-binding protein RPA1. Interacts with host TOP1; this interaction stimulates the enzymatic activity of TOP1. Phosphorylated. In terms of processing, sumoylated.

The protein resides in the host nucleus. It catalyses the reaction Couples ATP hydrolysis with the unwinding of duplex DNA by translocating in the 3'-5' direction.. The enzyme catalyses ATP + H2O = ADP + phosphate + H(+). Functionally, ATP-dependent DNA 3'-5' helicase required for initiation of viral DNA replication. It forms a complex with the viral E2 protein. The E1-E2 complex binds to the replication origin which contains binding sites for both proteins. During the initial step, a dimer of E1 interacts with a dimer of protein E2 leading to a complex that binds the viral origin of replication with high specificity. Then, a second dimer of E1 displaces the E2 dimer in an ATP-dependent manner to form the E1 tetramer. Following this, two E1 monomers are added to each half of the site, which results in the formation of two E1 trimers on the viral ori. Subsequently, two hexamers will be created. The double hexamer acts as a bi-directional helicase machinery and unwinds the viral DNA and then recruits the host DNA polymerase to start replication. This chain is Replication protein E1, found in Homo sapiens (Human).